The following is a 398-amino-acid chain: Tyrosine--tRNA ligase (398 aa).

The 'HIGH' region signature appears at 42 to 51 (PTAPDIHLGH). The 'KMSKS' region signature appears at 226–230 (KMSKS). An ATP-binding site is contributed by K229. The S4 RNA-binding domain occupies 336–397 (LAIANLLKDA…GKRKFAKVTL (62 aa)).

Belongs to the class-I aminoacyl-tRNA synthetase family. TyrS type 2 subfamily. In terms of assembly, homodimer.

The protein localises to the cytoplasm. The enzyme catalyses tRNA(Tyr) + L-tyrosine + ATP = L-tyrosyl-tRNA(Tyr) + AMP + diphosphate + H(+). Catalyzes the attachment of tyrosine to tRNA(Tyr) in a two-step reaction: tyrosine is first activated by ATP to form Tyr-AMP and then transferred to the acceptor end of tRNA(Tyr). In Shewanella oneidensis (strain ATCC 700550 / JCM 31522 / CIP 106686 / LMG 19005 / NCIMB 14063 / MR-1), this protein is Tyrosine--tRNA ligase.